The chain runs to 200 residues: Gamma-glutamyl-CDP-amidate hydrolase (200 aa).

The region spanning 20–200 (ECLALDWGKL…LKEWFSLIKE (181 aa)) is the Glutamine amidotransferase type-1 domain. The Nucleophile role is filled by Cys101. Catalysis depends on residues His178 and Glu180.

The catalysed reaction is N(5)-(cytidine 5'-diphosphoramidyl)-L-glutamine + H2O = cytidine 5'-diphosphoramidate + L-glutamate + H(+). It functions in the pathway capsule biogenesis; capsule polysaccharide biosynthesis. In terms of biological role, involved in the biosynthesis of the O-methyl phosphoramidate (MeOPN) group found on the capsular polysaccharide (CPS) of C.jejuni. Catalyzes the hydrolysis of CDP-L-glutamine to L-glutamate and cytidine diphosphoramidate. The polypeptide is Gamma-glutamyl-CDP-amidate hydrolase (Campylobacter jejuni subsp. jejuni serotype O:2 (strain ATCC 700819 / NCTC 11168)).